Here is a 279-residue protein sequence, read N- to C-terminus: Hydroxyethylthiazole kinase (279 aa).

Residue Met58 participates in substrate binding. 2 residues coordinate ATP: Lys134 and Thr180. Gly207 lines the substrate pocket.

The protein belongs to the Thz kinase family. It depends on Mg(2+) as a cofactor.

The catalysed reaction is 5-(2-hydroxyethyl)-4-methylthiazole + ATP = 4-methyl-5-(2-phosphooxyethyl)-thiazole + ADP + H(+). The protein operates within cofactor biosynthesis; thiamine diphosphate biosynthesis; 4-methyl-5-(2-phosphoethyl)-thiazole from 5-(2-hydroxyethyl)-4-methylthiazole: step 1/1. In terms of biological role, catalyzes the phosphorylation of the hydroxyl group of 4-methyl-5-beta-hydroxyethylthiazole (THZ). The sequence is that of Hydroxyethylthiazole kinase from Methanoculleus marisnigri (strain ATCC 35101 / DSM 1498 / JR1).